Consider the following 559-residue polypeptide: Aminopeptidase Q (559 aa).

At 1–13 (MSRPFSSGVYVSR) the chain is on the cytoplasmic side. A helical; Signal-anchor for type II membrane protein transmembrane segment spans residues 14 to 34 (GVALLLAALTAVLLLVLVALA). At 35 to 559 (SLYGSCAHVQ…VPFRHFLAEH (525 aa)) the chain is on the lumenal side. N-linked (GlcNAc...) asparagine glycans are attached at residues N121 and N129. E237 contacts substrate. N258, N285, and N343 each carry an N-linked (GlcNAc...) asparagine glycan. 376 to 380 (GAMEN) is a binding site for substrate. Residue H412 participates in Zn(2+) binding. E413 functions as the Proton acceptor in the catalytic mechanism. Residues H416 and E435 each coordinate Zn(2+).

The protein belongs to the peptidase M1 family. Homodimer. It depends on Zn(2+) as a cofactor. N-glycosylated.

The protein resides in the membrane. With respect to regulation, inhibited by bestatin. Functionally, metalloprotease which may be important for placentation by regulating biological activity of key peptides at the embryo-maternal interface. On synthetic substrates it shows a marked preference for Leu-4-methylcoumaryl-7-amide (Leu-MCA) over Met-MCA, Arg-LCA and Lys-LCA. Cleaves the N-terminal amino acid of several peptides such as angiotensin-3, kisspeptin-10 and endokinin C. This is Aminopeptidase Q from Mus musculus (Mouse).